Consider the following 643-residue polypeptide: 1-deoxy-D-xylulose-5-phosphate synthase (643 aa).

Residues histidine 78 and 119–121 each bind thiamine diphosphate; that span reads AHS. Aspartate 150 contacts Mg(2+). Thiamine diphosphate-binding positions include 151–152, asparagine 179, tyrosine 288, and glutamate 370; that span reads GS. Position 179 (asparagine 179) interacts with Mg(2+).

It belongs to the transketolase family. DXPS subfamily. As to quaternary structure, homodimer. The cofactor is Mg(2+). It depends on thiamine diphosphate as a cofactor.

It catalyses the reaction D-glyceraldehyde 3-phosphate + pyruvate + H(+) = 1-deoxy-D-xylulose 5-phosphate + CO2. The protein operates within metabolic intermediate biosynthesis; 1-deoxy-D-xylulose 5-phosphate biosynthesis; 1-deoxy-D-xylulose 5-phosphate from D-glyceraldehyde 3-phosphate and pyruvate: step 1/1. Catalyzes the acyloin condensation reaction between C atoms 2 and 3 of pyruvate and glyceraldehyde 3-phosphate to yield 1-deoxy-D-xylulose-5-phosphate (DXP). In Brucella canis (strain ATCC 23365 / NCTC 10854 / RM-666), this protein is 1-deoxy-D-xylulose-5-phosphate synthase.